The following is a 337-amino-acid chain: Tetraacyldisaccharide 4'-kinase (337 aa).

Residue Thr55–Thr62 participates in ATP binding.

It belongs to the LpxK family.

The catalysed reaction is a lipid A disaccharide + ATP = a lipid IVA + ADP + H(+). Its pathway is glycolipid biosynthesis; lipid IV(A) biosynthesis; lipid IV(A) from (3R)-3-hydroxytetradecanoyl-[acyl-carrier-protein] and UDP-N-acetyl-alpha-D-glucosamine: step 6/6. In terms of biological role, transfers the gamma-phosphate of ATP to the 4'-position of a tetraacyldisaccharide 1-phosphate intermediate (termed DS-1-P) to form tetraacyldisaccharide 1,4'-bis-phosphate (lipid IVA). The protein is Tetraacyldisaccharide 4'-kinase of Blochmanniella pennsylvanica (strain BPEN).